The primary structure comprises 130 residues: Large ribosomal subunit protein uL14 (130 aa).

Belongs to the universal ribosomal protein uL14 family. Part of the 50S ribosomal subunit. Forms a cluster with proteins L3 and L19. In the 70S ribosome, L14 and L19 interact and together make contacts with the 16S rRNA in bridges B5 and B8.

Functionally, binds to 23S rRNA. Forms part of two intersubunit bridges in the 70S ribosome. This is Large ribosomal subunit protein uL14 from Leptospira interrogans serogroup Icterohaemorrhagiae serovar copenhageni (strain Fiocruz L1-130).